Reading from the N-terminus, the 68-residue chain is MERRFIVYYNCSDCACGRYVSSLLTMSGAYVNVCVCIVFFILVYLSSCYNMRVLGFLRVCIYLYKLCR.

A helical transmembrane segment spans residues 23-43; the sequence is LLTMSGAYVNVCVCIVFFILV.

This sequence belongs to the virgaviridae suppressor of RNA silencing family.

The protein localises to the host endoplasmic reticulum membrane. In terms of biological role, suppressor of RNA-mediated gene silencing, also known as post-transcriptional gene silencing (PTGS), a mechanism of plant viral defense that performs sequence-specific inhibition of viral mRNAs expression. The RNA silencing suppression activity is variable depending on the origin of the isolate. This chain is Suppressor of RNA silencing (8K protein), found in Solanum nigrum (Black nightshade).